The sequence spans 489 residues: Rhamnulokinase (489 aa).

13–17 (ASSGR) is a binding site for ATP. Cys-68 and Cys-222 are disulfide-bonded. Substrate contacts are provided by residues Gly-83 and 236-238 (HDT). Asp-237 (proton acceptor) is an active-site residue. Residue Thr-259 participates in ATP binding. A substrate-binding site is contributed by Asn-296. Gln-304 serves as a coordination point for ATP. Cys-353 and Cys-370 form a disulfide bridge. ATP is bound at residue Gly-402. An intrachain disulfide couples Cys-413 to Cys-417.

It belongs to the rhamnulokinase family. Monomer. Mg(2+) serves as cofactor.

The catalysed reaction is L-rhamnulose + ATP = L-rhamnulose 1-phosphate + ADP + H(+). The protein operates within carbohydrate degradation; L-rhamnose degradation; glycerone phosphate from L-rhamnose: step 2/3. In terms of biological role, involved in the catabolism of L-rhamnose (6-deoxy-L-mannose). Catalyzes the transfer of the gamma-phosphate group from ATP to the 1-hydroxyl group of L-rhamnulose to yield L-rhamnulose 1-phosphate. The polypeptide is Rhamnulokinase (Escherichia coli O127:H6 (strain E2348/69 / EPEC)).